Reading from the N-terminus, the 235-residue chain is Class A basic helix-loop-helix protein 9 (235 aa).

Disordered regions lie at residues 1-69 (MLRG…RRMA) and 132-235 (GHLE…HPRS). Residues 55-67 (RRRARPVRSKARR) show a composition bias toward basic residues. The bHLH domain maps to 65 to 117 (ARRMAANVRERKRILDYNEAFNALRRALRHDLGGKRLSKIATLRRAIHRIAAL).

In terms of assembly, heterodimer. Efficient DNA binding requires dimerization with another bHLH protein. Interacts with TCF3, TCF4, and TCF12.

The protein localises to the nucleus. It is found in the cytoplasm. Transcription factor, which play a role in limb development. Is an essential player in the regulatory network governing transcription of genes implicated in limb morphogenesis. The sequence is that of Class A basic helix-loop-helix protein 9 (BHLHA9) from Homo sapiens (Human).